Consider the following 394-residue polypeptide: Chorismate synthase (394 aa).

Residue arginine 48 participates in NADP(+) binding. The tract at residues 52–90 (QSMITTSRGEPDEVSIQSGLQDGYTTGTPIGMTIENKDA) is disordered. A compositionally biased stretch (polar residues) spans 66-79 (SIQSGLQDGYTTGT). FMN is bound by residues 125–127 (RSS), glycine 297, 312–316 (HAPTS), and arginine 339.

Belongs to the chorismate synthase family. Requires FMNH2 as cofactor.

The enzyme catalyses 5-O-(1-carboxyvinyl)-3-phosphoshikimate = chorismate + phosphate. It participates in metabolic intermediate biosynthesis; chorismate biosynthesis; chorismate from D-erythrose 4-phosphate and phosphoenolpyruvate: step 7/7. Catalyzes the anti-1,4-elimination of the C-3 phosphate and the C-6 proR hydrogen from 5-enolpyruvylshikimate-3-phosphate (EPSP) to yield chorismate, which is the branch point compound that serves as the starting substrate for the three terminal pathways of aromatic amino acid biosynthesis. This reaction introduces a second double bond into the aromatic ring system. In Halobacterium salinarum (strain ATCC 700922 / JCM 11081 / NRC-1) (Halobacterium halobium), this protein is Chorismate synthase.